We begin with the raw amino-acid sequence, 362 residues long: Class I histocompatibility antigen, Gogo-B*0101 alpha chain (362 aa).

The signal sequence occupies residues 1–24; that stretch reads MRVTAPRTLLLLLSAALALTETWA. The interval 25-114 is alpha-1; that stretch reads GSHSMRYFDT…ALRYYNQSEA (90 aa). Residues 25–308 are Extracellular-facing; sequence GSHSMRYFDT…EPSSQSTIPI (284 aa). A glycan (N-linked (GlcNAc...) asparagine) is linked at Asn110. Residues 115–206 form an alpha-2 region; it reads GSHTIQRMFG…ENGRETLQRA (92 aa). Intrachain disulfides connect Cys125–Cys188 and Cys227–Cys283. The interval 207–298 is alpha-3; sequence DTPKTHVTHH…GLPKPLTLRW (92 aa). The 87-residue stretch at 209–295 folds into the Ig-like C1-type domain; that stretch reads PKTHVTHHPI…QHEGLPKPLT (87 aa). The tract at residues 299 to 308 is connecting peptide; sequence EPSSQSTIPI. The helical transmembrane segment at 309-332 threads the bilayer; it reads VGIVAGLAVLAVVVIGAVVTAVIC. Residues 333–362 lie on the Cytoplasmic side of the membrane; it reads RRKSSGGKGGSYSQAASSDSAQGSDVSLTA. The interval 335–362 is disordered; that stretch reads KSSGGKGGSYSQAASSDSAQGSDVSLTA. The span at 343–362 shows a compositional bias: low complexity; the sequence is SYSQAASSDSAQGSDVSLTA. A phosphoserine mark is found at Ser356 and Ser359.

It belongs to the MHC class I family. Heterodimer of an alpha chain and a beta chain (beta-2-microglobulin).

It is found in the membrane. Its function is as follows. Involved in the presentation of foreign antigens to the immune system. In Gorilla gorilla gorilla (Western lowland gorilla), this protein is Class I histocompatibility antigen, Gogo-B*0101 alpha chain.